Here is a 407-residue protein sequence, read N- to C-terminus: BMP-like protein unc-129 (407 aa).

The signal sequence occupies residues 1–18; it reads MRRLPIVLLLSVFSIANC. 3 N-linked (GlcNAc...) asparagine glycosylation sites follow: Asn-27, Asn-42, and Asn-211. The interval 252–283 is disordered; that stretch reads DDREPIKRKNGKKNSLSEEISSEDVWQGFGEE. N-linked (GlcNAc...) asparagine glycosylation is present at Asn-395.

The protein belongs to the TGF-beta family. As to quaternary structure, interacts with netrin receptor unc-5; the interaction is direct.

The protein resides in the secreted. The protein localises to the extracellular space. Functionally, required for the migration of axonal growth-cones and distal tip cells (DTC) along the dorsal-ventral axis of the body wall. Acts cell nonautonomously and independently of the classical daf-4, sma-6 or daf-1 TGFbeta receptor signaling. During axon migration, facilitates long-range repulsive guidance of unc-6/netrin by enhancing unc-5-unc-40 signaling at the expense of unc-5 alone signaling, probably through direct interaction with receptor unc-5. Involved in cell-cell contact formation in sensory rays in the developing male tail, via a pathway involving plx-2 and mab-20/semaphorin-2A. In Caenorhabditis elegans, this protein is BMP-like protein unc-129.